Consider the following 138-residue polypeptide: Transcription antitermination protein NusB (138 aa).

This sequence belongs to the NusB family.

Involved in transcription antitermination. Required for transcription of ribosomal RNA (rRNA) genes. Binds specifically to the boxA antiterminator sequence of the ribosomal RNA (rrn) operons. The chain is Transcription antitermination protein NusB from Coxiella burnetii (strain Dugway 5J108-111).